Consider the following 238-residue polypeptide: MENFDEVIKEYQKYLEGKEKTHKINSCKHPCCEEDNLKSVKNYFKVYHKKYIPSIIQKKKKERNEHAPPLLKDIQDKRCTNVFERLNDKQFYTGVQKTKFMELLKNNKNKSSYCYNNIKVFSTMLKKPCNYVVTPGTLGIQKYGIQTGRPKTIFLFNNEKKYDKGVYFLVKSYIKNIKSLCYEITKILQPSIGPTRKIYDQNFSLVRNVNDLINGGKYLCTSGDPPAPIRNLSLHFLT.

The interval 82-112 is partial p25alpha domain; that stretch reads VFERLNDKQFYTGVQKTKFMELLKNNKNKSS. Positions 151–232 constitute a Doublecortin domain; sequence KTIFLFNNEK…GDPPAPIRNL (82 aa).

Interacts with alpha-tubulin 1 and beta-tubulin; the interaction stabilizes microtubule assembly.

It localises to the cytoplasm. The protein localises to the cytoskeleton. Involved in the stabilization of microtubules. Probably by controlling microtubules stabilization, plays a role in invasion, microneme secretion and parasite growth in host erythrocytes. The chain is Doublecortin domain-containing protein from Plasmodium falciparum (isolate 3D7).